We begin with the raw amino-acid sequence, 488 residues long: Glycogen synthase (488 aa).

R20 is a binding site for ADP-alpha-D-glucose.

This sequence belongs to the glycosyltransferase 1 family. Bacterial/plant glycogen synthase subfamily.

It catalyses the reaction [(1-&gt;4)-alpha-D-glucosyl](n) + ADP-alpha-D-glucose = [(1-&gt;4)-alpha-D-glucosyl](n+1) + ADP + H(+). It functions in the pathway glycan biosynthesis; glycogen biosynthesis. Its function is as follows. Synthesizes alpha-1,4-glucan chains using ADP-glucose. This chain is Glycogen synthase, found in Chlorobaculum tepidum (strain ATCC 49652 / DSM 12025 / NBRC 103806 / TLS) (Chlorobium tepidum).